The chain runs to 312 residues: MFTGDRGLNALLESGVLQQEVPLANYTTWRVGGPAQWLAEPNNAEQCLELLQWAKAEGLTTRVIGAGSNLLIADAGLPGLTLCLRRLQGSQLDAESGQVKALAGEPLPTLARRAARLGLHGLEWAVGIPGTVGGAAAMNAGAQGGSTADCLTAVEVIDQSLTDTVKTTTLLSNTDLAYDYRHSLLQGSDQMVVAAQFQLEPGHDAKELMRKTSGNLSHRTTTQPYQWPSCGSVFRNPEPEKAGQLIEGLGLKGRRIGGAEVSSVHANFIVNVGDATADDIRALIDLVQNEVERMNGITLHPEVKRLGFQTTD.

One can recognise an FAD-binding PCMH-type domain in the interval 30–202 (RVGGPAQWLA…VAAQFQLEPG (173 aa)). R181 is an active-site residue. The active-site Proton donor is S232. The active site involves E302.

The protein belongs to the MurB family. FAD is required as a cofactor.

Its subcellular location is the cytoplasm. The catalysed reaction is UDP-N-acetyl-alpha-D-muramate + NADP(+) = UDP-N-acetyl-3-O-(1-carboxyvinyl)-alpha-D-glucosamine + NADPH + H(+). It participates in cell wall biogenesis; peptidoglycan biosynthesis. Functionally, cell wall formation. This is UDP-N-acetylenolpyruvoylglucosamine reductase from Synechococcus sp. (strain CC9311).